Consider the following 246-residue polypeptide: Probable transcriptional regulatory protein YebC (246 aa).

Positions 1–20 are disordered; it reads MAGHSKWANTRHRKAAQDAK.

This sequence belongs to the TACO1 family.

The protein resides in the cytoplasm. The chain is Probable transcriptional regulatory protein YebC from Escherichia coli O6:K15:H31 (strain 536 / UPEC).